Here is a 113-residue protein sequence, read N- to C-terminus: Cell cycle protein GpsB (113 aa).

The stretch at 36–68 (LDMVIKDYSTFTQEIEALQAENIRLVQELDNAP) forms a coiled coil.

The protein belongs to the GpsB family. As to quaternary structure, forms polymers through the coiled coil domains. Interacts with PBP1, MreC and EzrA.

It localises to the cytoplasm. In terms of biological role, divisome component that associates with the complex late in its assembly, after the Z-ring is formed, and is dependent on DivIC and PBP2B for its recruitment to the divisome. Together with EzrA, is a key component of the system that regulates PBP1 localization during cell cycle progression. Its main role could be the removal of PBP1 from the cell pole after pole maturation is completed. Also contributes to the recruitment of PBP1 to the division complex. Not essential for septum formation. This Listeria welshimeri serovar 6b (strain ATCC 35897 / DSM 20650 / CCUG 15529 / CIP 8149 / NCTC 11857 / SLCC 5334 / V8) protein is Cell cycle protein GpsB.